The primary structure comprises 464 residues: Putative protein TIC 214 C-terminal part (464 aa).

This sequence belongs to the TIC214 family. In terms of assembly, part of the Tic complex.

It localises to the plastid. It is found in the chloroplast. Functionally, involved in protein precursor import into chloroplasts. May be part of an intermediate translocation complex acting as a protein-conducting channel at the inner envelope. In Marchantia polymorpha (Common liverwort), this protein is Putative protein TIC 214 C-terminal part.